The following is an 81-amino-acid chain: Arminin 2a (81 aa).

The N-terminal stretch at 1 to 18 (MKTVFAILFLAFIALTYA) is a signal peptide. Positions 19–57 (RSYEDVKEEIKNEVVKEILEDLEEESDELDDKSKEINDA) are excised as a propeptide. Ala-78 carries the alanine amide modification.

It belongs to the arminin family. In terms of tissue distribution, expressed in entodermal epithelium along the body column.

The protein resides in the secreted. It localises to the target cell membrane. In terms of biological role, antimicrobial peptide with a broad-spectrum antimicrobial activity. Keeps its antibacterial activity under a wide range of salt concentrations that mimic physiological conditions of human blood, which is surprising, since Hydra is an obligate freshwater animal with nearly no salt tolerance. Does not affect red blood cells. The protein is Arminin 2a of Hydra vulgaris (Hydra).